We begin with the raw amino-acid sequence, 353 residues long: Photosystem II D2 protein (353 aa).

Threonine 2 carries the post-translational modification N-acetylthreonine. At threonine 2 the chain carries Phosphothreonine. A helical transmembrane segment spans residues 41 to 61 (CAYFALGGWFTGTTFVTSWYT). Histidine 118 lines the chlorophyll a pocket. The chain crosses the membrane as a helical span at residues 125–141 (GFMLRQFELARSVQLRP). Pheophytin a contacts are provided by glutamine 130 and asparagine 143. Residues 153–166 (VFVSVFLIYPLGQS) form a helical membrane-spanning segment. Histidine 198 lines the chlorophyll a pocket. Residues 208–228 (AALLCAIHGATVENTLFEDGD) traverse the membrane as a helical segment. A plastoquinone-binding residues include histidine 215 and phenylalanine 262. Histidine 215 lines the Fe cation pocket. A Fe cation-binding site is contributed by histidine 269. A helical membrane pass occupies residues 279 to 295 (GLWMSALGVVGLALNLR).

It belongs to the reaction center PufL/M/PsbA/D family. PSII is composed of 1 copy each of membrane proteins PsbA, PsbB, PsbC, PsbD, PsbE, PsbF, PsbH, PsbI, PsbJ, PsbK, PsbL, PsbM, PsbT, PsbX, PsbY, PsbZ, Psb30/Ycf12, at least 3 peripheral proteins of the oxygen-evolving complex and a large number of cofactors. It forms dimeric complexes. The D1/D2 heterodimer binds P680, chlorophylls that are the primary electron donor of PSII, and subsequent electron acceptors. It shares a non-heme iron and each subunit binds pheophytin, quinone, additional chlorophylls, carotenoids and lipids. There is also a Cl(-1) ion associated with D1 and D2, which is required for oxygen evolution. The PSII complex binds additional chlorophylls, carotenoids and specific lipids. is required as a cofactor.

It localises to the plastid. It is found in the chloroplast thylakoid membrane. It carries out the reaction 2 a plastoquinone + 4 hnu + 2 H2O = 2 a plastoquinol + O2. Functionally, photosystem II (PSII) is a light-driven water:plastoquinone oxidoreductase that uses light energy to abstract electrons from H(2)O, generating O(2) and a proton gradient subsequently used for ATP formation. It consists of a core antenna complex that captures photons, and an electron transfer chain that converts photonic excitation into a charge separation. The D1/D2 (PsbA/PsbD) reaction center heterodimer binds P680, the primary electron donor of PSII as well as several subsequent electron acceptors. D2 is needed for assembly of a stable PSII complex. The chain is Photosystem II D2 protein from Olimarabidopsis pumila (Dwarf rocket).